Consider the following 562-residue polypeptide: Potassium voltage-gated channel subfamily V member 2 (562 aa).

The span at 1-10 shows a compositional bias: basic and acidic residues; that stretch reads MLKQSNERRW. The tract at residues 1 to 34 is disordered; that stretch reads MLKQSNERRWSLSYKPWSTPETEDVPNTGSNQHR. The Cytoplasmic segment spans residues 1–163; the sequence is MLKQSNERRW…TDEYFFDRDP (163 aa). A helical membrane pass occupies residues 164 to 184; it reads AVFQLIYNFYTSGVLLVRDEL. The Extracellular portion of the chain corresponds to 185–269; that stretch reads CPRSFLEELG…KPFSSVAAKA (85 aa). A helical membrane pass occupies residues 270–290; sequence MGVATNLFVLISVVALALNTV. Residues 291–344 are Cytoplasmic-facing; sequence EEMQHQAEQGTGGGDPRPILEHVEMLCVAFFTLEFLLRLASTPNLQRFARSALN. A helical membrane pass occupies residues 345-365; that stretch reads LVDLVAILPFYLQLLLECFTS. Topologically, residues 366–391 are extracellular; that stretch reads EDQRHNKDSPREHDLETVGRVGKVGQ. A helical; Voltage-sensor transmembrane segment spans residues 392-412; it reads VLRIMRLMRIFRILKLARHST. Residues 413-427 are Cytoplasmic-facing; that stretch reads GLRAFGFTLRQCYQQ. Residues 428 to 448 form a helical membrane-spanning segment; that stretch reads VGCLMLFITMGIFSFSAAVYS. Residues 449–461 lie on the Extracellular side of the membrane; sequence VEHDVPGTNFTSI. Residue N457 is glycosylated (N-linked (GlcNAc...) asparagine). An intramembrane region (pore-forming) is located at residues 462 to 482; that stretch reads LHAWWWAAVSISTVGYGDMYP. The short motif at 474–479 is the Selectivity filter element; sequence TVGYGD. Residues 483-488 lie on the Extracellular side of the membrane; the sequence is ETHLGR. Residues 489–509 form a helical membrane-spanning segment; the sequence is LFAFLCIAFGIILNGMPISIL. Residues 510 to 562 are Cytoplasmic-facing; it reads YNKFSDYYSKLKAYEYTAIRRERGKVNFMQRATKKMAECLSESHAQSTTRQEN.

The protein belongs to the potassium channel family. V (TC 1.A.1.2) subfamily. Kv8.2/KCNV2 sub-subfamily. Heteromultimer with KCNB1, KCNC1 and KCNF1. Does not form homomultimers.

The protein resides in the cell membrane. Its function is as follows. Potassium channel subunit. Modulates channel activity by shifting the threshold and the half-maximal activation to more negative values. The sequence is that of Potassium voltage-gated channel subfamily V member 2 (Kcnv2) from Mus musculus (Mouse).